The primary structure comprises 213 residues: Pyridoxine/pyridoxamine 5'-phosphate oxidase (213 aa).

FMN-binding positions include 60–65 (RMVLMK), 75–76 (YS), Lys82, and Gln104. A substrate-binding site is contributed by Lys65. Tyr122, Arg126, and Ser130 together coordinate substrate. FMN-binding positions include 139–140 (QS) and Trp184. 190–192 (RLH) contacts substrate. Arg194 contributes to the FMN binding site.

The protein belongs to the pyridoxamine 5'-phosphate oxidase family. In terms of assembly, homodimer. Requires FMN as cofactor.

It catalyses the reaction pyridoxamine 5'-phosphate + O2 + H2O = pyridoxal 5'-phosphate + H2O2 + NH4(+). It carries out the reaction pyridoxine 5'-phosphate + O2 = pyridoxal 5'-phosphate + H2O2. It participates in cofactor metabolism; pyridoxal 5'-phosphate salvage; pyridoxal 5'-phosphate from pyridoxamine 5'-phosphate: step 1/1. It functions in the pathway cofactor metabolism; pyridoxal 5'-phosphate salvage; pyridoxal 5'-phosphate from pyridoxine 5'-phosphate: step 1/1. Catalyzes the oxidation of either pyridoxine 5'-phosphate (PNP) or pyridoxamine 5'-phosphate (PMP) into pyridoxal 5'-phosphate (PLP). In Rhodopseudomonas palustris (strain BisB18), this protein is Pyridoxine/pyridoxamine 5'-phosphate oxidase.